The chain runs to 113 residues: Large ribosomal subunit protein uL22 (113 aa).

Belongs to the universal ribosomal protein uL22 family. Part of the 50S ribosomal subunit.

Functionally, this protein binds specifically to 23S rRNA; its binding is stimulated by other ribosomal proteins, e.g. L4, L17, and L20. It is important during the early stages of 50S assembly. It makes multiple contacts with different domains of the 23S rRNA in the assembled 50S subunit and ribosome. The globular domain of the protein is located near the polypeptide exit tunnel on the outside of the subunit, while an extended beta-hairpin is found that lines the wall of the exit tunnel in the center of the 70S ribosome. The sequence is that of Large ribosomal subunit protein uL22 from Bacillus mycoides (strain KBAB4) (Bacillus weihenstephanensis).